A 58-amino-acid chain; its full sequence is PGPCCNDKCVCKEGGCKEGCQCTSCRCSPCEKCSSGCKCANKEECSKTCSKACSCCPT.

Residues 1 to 28 (PGPCCNDKCVCKEGGCKEGCQCTSCRCS) are beta. Residues Cys4, Cys5, Cys9, Cys11, Cys16, Cys20, Cys22, Cys25, Cys27, Cys30, Cys33, Cys37, Cys39, Cys45, Cys49, Cys53, Cys55, and Cys56 each contribute to the a divalent metal cation site. The interval 29–58 (PCEKCSSGCKCANKEECSKTCSKACSCCPT) is alpha.

It belongs to the metallothionein superfamily. Type 3 family.

Metallothioneins have a high content of cysteine residues that bind various heavy metals. Class I MTS in marine crustacea are involved in the sequestration of elevated levels of heavy-metal ions. This chain is Metallothionein-1, found in Scylla serrata (Mud crab).